Here is a 147-residue protein sequence, read N- to C-terminus: Small ribosomal subunit protein uS5 (147 aa).

Residues 9–72 (FEEVIVDIGR…DDAFKNIVEV (64 aa)) form the S5 DRBM domain.

Belongs to the universal ribosomal protein uS5 family. Part of the 30S ribosomal subunit. Contacts proteins S4 and S8.

In terms of biological role, with S4 and S12 plays an important role in translational accuracy. Functionally, located at the back of the 30S subunit body where it stabilizes the conformation of the head with respect to the body. The chain is Small ribosomal subunit protein uS5 from Campylobacter jejuni subsp. jejuni serotype O:6 (strain 81116 / NCTC 11828).